A 1368-amino-acid chain; its full sequence is DNA-directed RNA polymerase subunit beta (1368 aa).

It belongs to the RNA polymerase beta chain family. The RNAP catalytic core consists of 2 alpha, 1 beta, 1 beta' and 1 omega subunit. When a sigma factor is associated with the core the holoenzyme is formed, which can initiate transcription.

It carries out the reaction RNA(n) + a ribonucleoside 5'-triphosphate = RNA(n+1) + diphosphate. DNA-dependent RNA polymerase catalyzes the transcription of DNA into RNA using the four ribonucleoside triphosphates as substrates. This Burkholderia cenocepacia (strain ATCC BAA-245 / DSM 16553 / LMG 16656 / NCTC 13227 / J2315 / CF5610) (Burkholderia cepacia (strain J2315)) protein is DNA-directed RNA polymerase subunit beta.